A 694-amino-acid polypeptide reads, in one-letter code: Elongation factor G (694 aa).

Residues 8-287 (EDYRNFGIMA…AVISYLPSPV (280 aa)) enclose the tr-type G domain. Residues 17 to 24 (AHIDAGKT), 86 to 90 (DTPGH), and 140 to 143 (NKMD) contribute to the GTP site.

Belongs to the TRAFAC class translation factor GTPase superfamily. Classic translation factor GTPase family. EF-G/EF-2 subfamily.

The protein resides in the cytoplasm. Its function is as follows. Catalyzes the GTP-dependent ribosomal translocation step during translation elongation. During this step, the ribosome changes from the pre-translocational (PRE) to the post-translocational (POST) state as the newly formed A-site-bound peptidyl-tRNA and P-site-bound deacylated tRNA move to the P and E sites, respectively. Catalyzes the coordinated movement of the two tRNA molecules, the mRNA and conformational changes in the ribosome. This chain is Elongation factor G, found in Bartonella quintana (strain Toulouse) (Rochalimaea quintana).